The following is a 210-amino-acid chain: Homeobox protein Rhox5 (210 aa).

Positions 1–119 (MEAEGSSRKV…GNPGGRQMPL (119 aa)) are disordered. The span at 17–30 (GVKEDSEEQHDVKA) shows a compositional bias: basic and acidic residues. The span at 47-79 (GQPGVGAVGTEGEGEELNGGKGHFGPGAPGPMG) shows a compositional bias: gly residues. A DNA-binding region (homeobox; atypical) is located at residues 117-175 (MPLQGSRFAQHRLRELESILQRTNSFDVPREDLDRLMDACVSRVQNWFKIRRAAARRTR).

The protein resides in the nucleus. Its function is as follows. Transcription factor required for differentiation of embryonic stem cells (ESCs) into primordial germ cells. The chain is Homeobox protein Rhox5 (Rhox5) from Mus musculus (Mouse).